A 247-amino-acid polypeptide reads, in one-letter code: Enolase-phosphatase E1 (247 aa).

Positions 12 and 14 each coordinate Mg(2+). Residues 141 to 142 (SS) and lysine 175 each bind substrate. Aspartate 200 lines the Mg(2+) pocket.

The protein belongs to the HAD-like hydrolase superfamily. MasA/MtnC family. As to quaternary structure, monomer. Requires Mg(2+) as cofactor.

The protein localises to the cytoplasm. Its subcellular location is the nucleus. The catalysed reaction is 5-methylsulfanyl-2,3-dioxopentyl phosphate + H2O = 1,2-dihydroxy-5-(methylsulfanyl)pent-1-en-3-one + phosphate. Its pathway is amino-acid biosynthesis; L-methionine biosynthesis via salvage pathway; L-methionine from S-methyl-5-thio-alpha-D-ribose 1-phosphate: step 3/6. It participates in amino-acid biosynthesis; L-methionine biosynthesis via salvage pathway; L-methionine from S-methyl-5-thio-alpha-D-ribose 1-phosphate: step 4/6. Bifunctional enzyme that catalyzes the enolization of 2,3-diketo-5-methylthiopentyl-1-phosphate (DK-MTP-1-P) into the intermediate 2-hydroxy-3-keto-5-methylthiopentenyl-1-phosphate (HK-MTPenyl-1-P), which is then dephosphorylated to form the acireductone 1,2-dihydroxy-3-keto-5-methylthiopentene (DHK-MTPene). This Drosophila willistoni (Fruit fly) protein is Enolase-phosphatase E1.